A 341-amino-acid polypeptide reads, in one-letter code: 5-formaminoimidazole-4-carboxamide-1-(beta)-D-ribofuranosyl 5'-monophosphate synthetase (341 aa).

5-amino-1-(5-phospho-beta-D-ribosyl)imidazole-4-carboxamide-binding residues include His-27 and Ser-92. Residues 113 to 328 (RELLRWEADQ…MGERIAHEIK (216 aa)) enclose the ATP-grasp domain. Residues 143-195 (AEEV…VPAY) and Glu-217 each bind ATP. Asn-237 is a binding site for 5-amino-1-(5-phospho-beta-D-ribosyl)imidazole-4-carboxamide. The Mg(2+) site is built by Glu-276 and Glu-289.

It belongs to the phosphohexose mutase family. The cofactor is Mg(2+). Requires Mn(2+) as cofactor.

It carries out the reaction 5-amino-1-(5-phospho-beta-D-ribosyl)imidazole-4-carboxamide + formate + ATP = 5-formamido-1-(5-phospho-D-ribosyl)imidazole-4-carboxamide + ADP + phosphate. The protein operates within purine metabolism; IMP biosynthesis via de novo pathway; 5-formamido-1-(5-phospho-D-ribosyl)imidazole-4-carboxamide from 5-amino-1-(5-phospho-D-ribosyl)imidazole-4-carboxamide (formate route): step 1/1. Its function is as follows. Catalyzes the ATP- and formate-dependent formylation of 5-aminoimidazole-4-carboxamide-1-beta-d-ribofuranosyl 5'-monophosphate (AICAR) to 5-formaminoimidazole-4-carboxamide-1-beta-d-ribofuranosyl 5'-monophosphate (FAICAR) in the absence of folates. In Pyrobaculum aerophilum (strain ATCC 51768 / DSM 7523 / JCM 9630 / CIP 104966 / NBRC 100827 / IM2), this protein is 5-formaminoimidazole-4-carboxamide-1-(beta)-D-ribofuranosyl 5'-monophosphate synthetase.